Here is a 71-residue protein sequence, read N- to C-terminus: Sec-independent protein translocase protein TatA (71 aa).

Residues 1-21 (MGSFSIWHWLIVLVIVALIFG) traverse the membrane as a helical segment. The tract at residues 48–71 (ADKTEQVTQQQTTIDVQAKEKQNS) is disordered.

This sequence belongs to the TatA/E family. As to quaternary structure, the Tat system comprises two distinct complexes: a TatABC complex, containing multiple copies of TatA, TatB and TatC subunits, and a separate TatA complex, containing only TatA subunits. Substrates initially bind to the TatABC complex, which probably triggers association of the separate TatA complex to form the active translocon.

The protein resides in the cell inner membrane. Functionally, part of the twin-arginine translocation (Tat) system that transports large folded proteins containing a characteristic twin-arginine motif in their signal peptide across membranes. TatA could form the protein-conducting channel of the Tat system. In Bordetella avium (strain 197N), this protein is Sec-independent protein translocase protein TatA.